The primary structure comprises 282 residues: NADPH-dependent 7-cyano-7-deazaguanine reductase (282 aa).

Substrate is bound at residue 90–92 (IES). An NADPH-binding site is contributed by 92-93 (SK). Catalysis depends on Cys-190, which acts as the Thioimide intermediate. The active-site Proton donor is Asp-197. Residue 229-230 (HE) coordinates substrate. NADPH is bound at residue 258-259 (RG).

The protein belongs to the GTP cyclohydrolase I family. QueF type 2 subfamily. Homodimer.

It localises to the cytoplasm. It catalyses the reaction 7-aminomethyl-7-carbaguanine + 2 NADP(+) = 7-cyano-7-deazaguanine + 2 NADPH + 3 H(+). It participates in tRNA modification; tRNA-queuosine biosynthesis. Functionally, catalyzes the NADPH-dependent reduction of 7-cyano-7-deazaguanine (preQ0) to 7-aminomethyl-7-deazaguanine (preQ1). This Aeromonas salmonicida (strain A449) protein is NADPH-dependent 7-cyano-7-deazaguanine reductase.